The following is a 207-amino-acid chain: MGRNREDDITPLQQETLDEICRYVSAKGYPPTVKEMSETFGISHASVHDRINQLVRKGYLKREEGKARGLTVTKHPQTNAVALVAVPIVGTVAAGHPIFAHENITGEVLVEASVVGSGKCFALYTQGDSMIDAGINDGDLIIVRRQPIAEDGDIVIALLDDEATVKRLKIDNELIELVPENPRLKPIRVKPEDELRILGKVVGRKRI.

Residues valine 33–asparagine 52 constitute a DNA-binding region (H-T-H motif). Catalysis depends on for autocatalytic cleavage activity residues serine 129 and lysine 166.

This sequence belongs to the peptidase S24 family. As to quaternary structure, homodimer.

It carries out the reaction Hydrolysis of Ala-|-Gly bond in repressor LexA.. Functionally, represses a number of genes involved in the response to DNA damage (SOS response), including recA and lexA. In the presence of single-stranded DNA, RecA interacts with LexA causing an autocatalytic cleavage which disrupts the DNA-binding part of LexA, leading to derepression of the SOS regulon and eventually DNA repair. In Oleidesulfovibrio alaskensis (strain ATCC BAA-1058 / DSM 17464 / G20) (Desulfovibrio alaskensis), this protein is LexA repressor.